The following is a 360-amino-acid chain: D-alanine--D-alanine ligase (360 aa).

The region spanning 146–352 is the ATP-grasp domain; it reads KLCAVQAGIH…FTELIDRLVR (207 aa). 179–234 lines the ATP pocket; that stretch reads KKRFAPPFFVKPANLGSSVGIAKIHSFDELENALDEACRLDVKILVEKAIEGREVE. Residues Asp305, Glu319, and Asn321 each contribute to the Mg(2+) site.

Belongs to the D-alanine--D-alanine ligase family. It depends on Mg(2+) as a cofactor. The cofactor is Mn(2+).

The protein localises to the cytoplasm. The enzyme catalyses 2 D-alanine + ATP = D-alanyl-D-alanine + ADP + phosphate + H(+). It participates in cell wall biogenesis; peptidoglycan biosynthesis. Cell wall formation. This chain is D-alanine--D-alanine ligase, found in Chlorobium phaeobacteroides (strain BS1).